The following is a 181-amino-acid chain: Coatomer subunit zeta-3 (181 aa).

Belongs to the adaptor complexes small subunit family. Oligomeric complex that consists of at least the alpha, beta, beta', gamma, delta, epsilon and zeta subunits.

The protein resides in the cytoplasm. It localises to the golgi apparatus membrane. The protein localises to the cytoplasmic vesicle. Its subcellular location is the COPI-coated vesicle membrane. In terms of biological role, the coatomer is a cytosolic protein complex that binds to dilysine motifs and reversibly associates with Golgi non-clathrin-coated vesicles, which further mediate biosynthetic protein transport from the ER, via the Golgi up to the trans Golgi network. Coatomer complex is required for budding from Golgi membranes, and is essential for the retrograde Golgi-to-ER transport of dilysine-tagged proteins. The zeta subunit may be involved in regulating the coat assembly and, hence, the rate of biosynthetic protein transport due to its association-dissociation properties with the coatomer complex. The polypeptide is Coatomer subunit zeta-3 (Arabidopsis thaliana (Mouse-ear cress)).